A 272-amino-acid polypeptide reads, in one-letter code: Microcin B17-processing protein McbC (272 aa).

To R.leguminosarum TfxB which is involved in the processing of trifolitoxin.

The protein localises to the cytoplasm. Necessary to process the inactive microcin B17 (McbA) precursor into the active peptide. The protein is Microcin B17-processing protein McbC (mcbC) of Escherichia coli.